The sequence spans 431 residues: MKIAEIKGREILDSRGNPTVEVDVILESGIMGRASVPSGASTGEHEALELRDGDKTRYGGKGVLKAVENINTLIAPALKGMDSMDQRGIDKAMLDLDGTPTKSKLGANAILGVSLAVAKAAANYLDIPLYRYIGGTNTYVMPVPMMNIINGGSHSDAPIAFQEFMIRPVGAKTFREALRMGAEVFHALKEVLKKRGLSTAVGDEGGFAPALDGTEDALNCILAAIEAAGYEPFKHITIGLDCASSEFYHDGIYDYTKFEGPKGEKRSAAEQVAYLEKLSWDYPIDSIEDGMAENDWEGWRMLTERLGNRCQLVGDDLFVTNVKFLEKGISEGCANSILIKVNQIGSLTETLDAIEMAQRNGYTTVTSHRSGETEDATIADIAVATNSGQIKTGSLSRSDRMAKYNQLLRIEEELGNRAVYGYKKIARNFKA.

Gln162 contacts (2R)-2-phosphoglycerate. Glu204 (proton donor) is an active-site residue. 3 residues coordinate Mg(2+): Asp241, Glu288, and Asp315. (2R)-2-phosphoglycerate contacts are provided by Lys340, Arg369, Ser370, and Lys391. Catalysis depends on Lys340, which acts as the Proton acceptor.

Belongs to the enolase family. Requires Mg(2+) as cofactor.

The protein resides in the cytoplasm. It is found in the secreted. Its subcellular location is the cell surface. The catalysed reaction is (2R)-2-phosphoglycerate = phosphoenolpyruvate + H2O. It functions in the pathway carbohydrate degradation; glycolysis; pyruvate from D-glyceraldehyde 3-phosphate: step 4/5. Functionally, catalyzes the reversible conversion of 2-phosphoglycerate (2-PG) into phosphoenolpyruvate (PEP). It is essential for the degradation of carbohydrates via glycolysis. This Phocaeicola vulgatus (strain ATCC 8482 / DSM 1447 / JCM 5826 / CCUG 4940 / NBRC 14291 / NCTC 11154) (Bacteroides vulgatus) protein is Enolase.